Consider the following 513-residue polypeptide: ATP synthase subunit alpha (513 aa).

Residue 169–176 (GDRQTGKT) coordinates ATP.

Belongs to the ATPase alpha/beta chains family. In terms of assembly, F-type ATPases have 2 components, CF(1) - the catalytic core - and CF(0) - the membrane proton channel. CF(1) has five subunits: alpha(3), beta(3), gamma(1), delta(1), epsilon(1). CF(0) has three main subunits: a(1), b(2) and c(9-12). The alpha and beta chains form an alternating ring which encloses part of the gamma chain. CF(1) is attached to CF(0) by a central stalk formed by the gamma and epsilon chains, while a peripheral stalk is formed by the delta and b chains.

The protein resides in the cell inner membrane. The catalysed reaction is ATP + H2O + 4 H(+)(in) = ADP + phosphate + 5 H(+)(out). Produces ATP from ADP in the presence of a proton gradient across the membrane. The alpha chain is a regulatory subunit. In Ruegeria sp. (strain TM1040) (Silicibacter sp.), this protein is ATP synthase subunit alpha.